Consider the following 1680-residue polypeptide: GRIP and coiled-coil domain-containing protein 2 (1680 aa).

Position 1 is an N-acetylmethionine (Met-1). Low complexity predominate over residues 1 to 14; sequence MEDSAPDAVAAAPS. Disordered regions lie at residues 1–23 and 1468–1522; these read MEDS…KLET and KSEP…SSAG. Positions 31–1614 form a coiled coil; the sequence is KFAKKQMMLL…REKSVANLEY (1584 aa). Residues 1469 to 1484 are compositionally biased toward polar residues; it reads SEPSTRSPASSHQPSK. Ser-1475 and Ser-1479 each carry phosphoserine. The segment at 1570–1609 is mediates interaction with RAB6A; it reads HLNGLLRETEATNAILMEQIKLLKSEIRRLERNQEREKSV. The tract at residues 1570–1680 is mediates interaction with RAB9A; sequence HLNGLLRETE…SYLHSWSGLR (111 aa). One can recognise a GRIP domain in the interval 1605–1655; that stretch reads REKSVANLEYLKNVLLRFIFLKPGSERERLLPVIDTMLQLSPEEKGKLATV.

In terms of assembly, homodimer. Interacts (via GRIP domain) with RAB6A (preferentially in its GTP-bound form). May interact (RAB6A-dependent) with ARL1; might be involved in GCC2 Golgi localization. Interacts (probably via GRIP domain) with RAB9A (preferentially in its GTP-bound form). Interacts with CLASP1 and CLASP2; recruits both proteins to membranes of the TGN. Interacts with STX16.

Its subcellular location is the cytoplasm. It is found in the golgi apparatus. It localises to the trans-Golgi network membrane. Functionally, golgin which probably tethers transport vesicles to the trans-Golgi network (TGN) and regulates vesicular transport between the endosomes and the Golgi. As a RAB9A effector it is involved in recycling of the mannose 6-phosphate receptor from the late endosomes to the TGN. May also play a role in transport between the recycling endosomes and the Golgi. Required for maintenance of the Golgi structure, it is involved in the biogenesis of noncentrosomal, Golgi-associated microtubules through recruitment of CLASP1 and CLASP2. The polypeptide is GRIP and coiled-coil domain-containing protein 2 (Gcc2) (Mus musculus (Mouse)).